Reading from the N-terminus, the 338-residue chain is 1-aminocyclopropane-1-carboxylate deaminase (338 aa).

At lysine 51 the chain carries N6-(pyridoxal phosphate)lysine. The active-site Nucleophile is serine 78.

This sequence belongs to the ACC deaminase/D-cysteine desulfhydrase family. It depends on pyridoxal 5'-phosphate as a cofactor.

The catalysed reaction is 1-aminocyclopropane-1-carboxylate + H2O = 2-oxobutanoate + NH4(+). Functionally, catalyzes a cyclopropane ring-opening reaction, the irreversible conversion of 1-aminocyclopropane-1-carboxylate (ACC) to ammonia and alpha-ketobutyrate. Allows growth on ACC as a nitrogen source. This is 1-aminocyclopropane-1-carboxylate deaminase from Enterobacter cloacae.